The following is a 281-amino-acid chain: 2,3,4,5-tetrahydropyridine-2,6-dicarboxylate N-succinyltransferase (281 aa).

Residues Arg108 and Asp145 each contribute to the substrate site.

Belongs to the transferase hexapeptide repeat family. As to quaternary structure, homotrimer.

It localises to the cytoplasm. It catalyses the reaction (S)-2,3,4,5-tetrahydrodipicolinate + succinyl-CoA + H2O = (S)-2-succinylamino-6-oxoheptanedioate + CoA. It functions in the pathway amino-acid biosynthesis; L-lysine biosynthesis via DAP pathway; LL-2,6-diaminopimelate from (S)-tetrahydrodipicolinate (succinylase route): step 1/3. In Rhodopseudomonas palustris (strain BisB5), this protein is 2,3,4,5-tetrahydropyridine-2,6-dicarboxylate N-succinyltransferase.